The following is a 525-amino-acid chain: GMP synthase [glutamine-hydrolyzing] (525 aa).

Positions 11–200 (PVLVVDFGAQ…LTEIAGLEQN (190 aa)) constitute a Glutamine amidotransferase type-1 domain. C88 acts as the Nucleophile in catalysis. Active-site residues include H174 and E176. Positions 201–399 (WTAANIAEEL…LGLPEEIVNR (199 aa)) constitute a GMPS ATP-PPase domain. 229–235 (SGGVDSA) contributes to the ATP binding site.

Homodimer.

It catalyses the reaction XMP + L-glutamine + ATP + H2O = GMP + L-glutamate + AMP + diphosphate + 2 H(+). Its pathway is purine metabolism; GMP biosynthesis; GMP from XMP (L-Gln route): step 1/1. Its function is as follows. Catalyzes the synthesis of GMP from XMP. This Corynebacterium diphtheriae (strain ATCC 700971 / NCTC 13129 / Biotype gravis) protein is GMP synthase [glutamine-hydrolyzing].